Reading from the N-terminus, the 365-residue chain is Histidinol-phosphate aminotransferase (365 aa).

The residue at position 227 (Lys-227) is an N6-(pyridoxal phosphate)lysine.

Belongs to the class-II pyridoxal-phosphate-dependent aminotransferase family. Histidinol-phosphate aminotransferase subfamily. Homodimer. Requires pyridoxal 5'-phosphate as cofactor.

It catalyses the reaction L-histidinol phosphate + 2-oxoglutarate = 3-(imidazol-4-yl)-2-oxopropyl phosphate + L-glutamate. The protein operates within amino-acid biosynthesis; L-histidine biosynthesis; L-histidine from 5-phospho-alpha-D-ribose 1-diphosphate: step 7/9. This Polaromonas naphthalenivorans (strain CJ2) protein is Histidinol-phosphate aminotransferase.